A 162-amino-acid chain; its full sequence is NADH-quinone oxidoreductase subunit C (162 aa).

It belongs to the complex I 30 kDa subunit family. In terms of assembly, NDH-1 is composed of 14 different subunits. Subunits NuoB, C, D, E, F, and G constitute the peripheral sector of the complex.

It localises to the cell inner membrane. The enzyme catalyses a quinone + NADH + 5 H(+)(in) = a quinol + NAD(+) + 4 H(+)(out). In terms of biological role, NDH-1 shuttles electrons from NADH, via FMN and iron-sulfur (Fe-S) centers, to quinones in the respiratory chain. The immediate electron acceptor for the enzyme in this species is believed to be ubiquinone. Couples the redox reaction to proton translocation (for every two electrons transferred, four hydrogen ions are translocated across the cytoplasmic membrane), and thus conserves the redox energy in a proton gradient. In Geobacter metallireducens (strain ATCC 53774 / DSM 7210 / GS-15), this protein is NADH-quinone oxidoreductase subunit C.